Reading from the N-terminus, the 427-residue chain is Putative zinc protease AlbF (427 aa).

H66 is a binding site for Zn(2+). E69 serves as the catalytic Proton acceptor. Zn(2+)-binding residues include H70 and E142.

The protein belongs to the peptidase M16 family. Requires Zn(2+) as cofactor.

In terms of biological role, required for production of the bacteriocin subtilosin. Could catalyze some step in the processing of presubtilosin. This chain is Putative zinc protease AlbF (albF), found in Bacillus subtilis.